The following is a 102-amino-acid chain: Large ribosomal subunit protein uL24 (102 aa).

This sequence belongs to the universal ribosomal protein uL24 family. As to quaternary structure, part of the 50S ribosomal subunit.

Functionally, one of two assembly initiator proteins, it binds directly to the 5'-end of the 23S rRNA, where it nucleates assembly of the 50S subunit. In terms of biological role, one of the proteins that surrounds the polypeptide exit tunnel on the outside of the subunit. This chain is Large ribosomal subunit protein uL24, found in Cupriavidus pinatubonensis (strain JMP 134 / LMG 1197) (Cupriavidus necator (strain JMP 134)).